The chain runs to 339 residues: tRNA N6-adenosine threonylcarbamoyltransferase (339 aa).

Fe cation-binding residues include H112 and H116. Substrate-binding positions include 135 to 139, D168, G181, and N273; that span reads LVSGG. D301 provides a ligand contact to Fe cation.

Belongs to the KAE1 / TsaD family. Fe(2+) is required as a cofactor.

The protein localises to the cytoplasm. It carries out the reaction L-threonylcarbamoyladenylate + adenosine(37) in tRNA = N(6)-L-threonylcarbamoyladenosine(37) in tRNA + AMP + H(+). Its function is as follows. Required for the formation of a threonylcarbamoyl group on adenosine at position 37 (t(6)A37) in tRNAs that read codons beginning with adenine. Is involved in the transfer of the threonylcarbamoyl moiety of threonylcarbamoyl-AMP (TC-AMP) to the N6 group of A37, together with TsaE and TsaB. TsaD likely plays a direct catalytic role in this reaction. This Coxiella burnetii (strain RSA 493 / Nine Mile phase I) protein is tRNA N6-adenosine threonylcarbamoyltransferase.